Consider the following 292-residue polypeptide: Retinal homeobox protein Rx3 (292 aa).

The disordered stretch occupies residues M1–S27. The short motif at H32 to G39 is the Octapeptide motif element. 2 disordered regions span residues G53–K72 and S85–R107. Basic and acidic residues-rich tracts occupy residues T57–K72 and D92–P102. A DNA-binding region (homeobox) is located at residues H106 to E165. Positions T272 to I285 match the OAR motif. Positions R278 to K282 match the Nuclear localization signal motif.

The protein belongs to the paired homeobox family. Bicoid subfamily.

The protein localises to the nucleus. Plays a critical role in eye formation by regulating the initial specification of retinal cells and/or their subsequent proliferation. In Danio rerio (Zebrafish), this protein is Retinal homeobox protein Rx3 (rx3).